The primary structure comprises 36 residues: Pancreatic polypeptide (36 aa).

The residue at position 36 (tyrosine 36) is a Tyrosine amide.

This sequence belongs to the NPY family.

It localises to the secreted. Its function is as follows. Hormone secreted by pancreatic cells that acts as a regulator of pancreatic and gastrointestinal functions. This Struthio camelus (Common ostrich) protein is Pancreatic polypeptide (PPY).